Here is a 356-residue protein sequence, read N- to C-terminus: MSKESIYGLTMAQLTDWLMERGHKKFRATQVWDWLYRKRVTTFAEMTNVNKDCLQLLEDHFAIETMSEHVRQESKDGTIKFLFRLQDGNLIETVLMRHKYGFSVCVTTQVGCNIGCSFCASGLLTKNRDLSSGEIVEQIMKVQFHLDQVGKEERVSHVVVMGIGEPFDNFQNTVDFLEIIKDHKGLAIGARHITVSTSGLAHKIYEFADLKLQVNLAVSLHAPNNELRSRIMKINKAFPIEKLMDSINYYIEKTNRRVTYEYILIKDVNDHKEEALQLAELIGDKRHLSYVNLIPYNPVDEHSQYQRSEPEAISQFFDTLKKKGINCGVRLEHGTDIDAACGQLRSKQEKKKVKVN.

Glutamate 92 acts as the Proton acceptor in catalysis. Residues 98–336 enclose the Radical SAM core domain; sequence HKYGFSVCVT…CGVRLEHGTD (239 aa). A disulfide bridge connects residues cysteine 105 and cysteine 341. Residues cysteine 112, cysteine 116, and cysteine 119 each coordinate [4Fe-4S] cluster. S-adenosyl-L-methionine contacts are provided by residues 164–165, serine 196, 219–221, and asparagine 297; these read GE and SLH. Cysteine 341 (S-methylcysteine intermediate) is an active-site residue.

It belongs to the radical SAM superfamily. RlmN family. It depends on [4Fe-4S] cluster as a cofactor.

The protein localises to the cytoplasm. The enzyme catalyses adenosine(2503) in 23S rRNA + 2 reduced [2Fe-2S]-[ferredoxin] + 2 S-adenosyl-L-methionine = 2-methyladenosine(2503) in 23S rRNA + 5'-deoxyadenosine + L-methionine + 2 oxidized [2Fe-2S]-[ferredoxin] + S-adenosyl-L-homocysteine. It catalyses the reaction adenosine(37) in tRNA + 2 reduced [2Fe-2S]-[ferredoxin] + 2 S-adenosyl-L-methionine = 2-methyladenosine(37) in tRNA + 5'-deoxyadenosine + L-methionine + 2 oxidized [2Fe-2S]-[ferredoxin] + S-adenosyl-L-homocysteine. Functionally, specifically methylates position 2 of adenine 2503 in 23S rRNA and position 2 of adenine 37 in tRNAs. The chain is Probable dual-specificity RNA methyltransferase RlmN from Shouchella clausii (strain KSM-K16) (Alkalihalobacillus clausii).